The sequence spans 687 residues: Polyphosphate kinase (687 aa).

N45 lines the ATP pocket. Positions 375 and 405 each coordinate Mg(2+). Residue H435 is the Phosphohistidine intermediate of the active site. ATP is bound by residues Y472, R568, and H596.

The protein belongs to the polyphosphate kinase 1 (PPK1) family. Mg(2+) is required as a cofactor. Post-translationally, an intermediate of this reaction is the autophosphorylated ppk in which a phosphate is covalently linked to a histidine residue through a N-P bond.

It catalyses the reaction [phosphate](n) + ATP = [phosphate](n+1) + ADP. Functionally, catalyzes the reversible transfer of the terminal phosphate of ATP to form a long-chain polyphosphate (polyP). The chain is Polyphosphate kinase from Burkholderia vietnamiensis (strain G4 / LMG 22486) (Burkholderia cepacia (strain R1808)).